The chain runs to 719 residues: Disintegrin and metalloproteinase domain-containing protein 18 (719 aa).

The N-terminal stretch at 1 to 19 (MPLLFILAELAMLFARLDS) is a signal peptide. Positions 20–179 (EGICLHITVP…QDKNHSQLLP (160 aa)) are excised as a propeptide. N-linked (GlcNAc...) asparagine glycosylation is found at N61, N75, N121, N152, N173, N244, and N331. Residues 173 to 683 (NHSQLLPQSL…TKRLSKNEDS (511 aa)) are Extracellular-facing. The Peptidase M12B domain occupies 180–378 (QSLKLHIIVG…FDTQCLGDLS (199 aa)). 3 disulfide bridges follow: C289–C373, C332–C357, and C334–C339. Residues N356 and N405 are each glycosylated (N-linked (GlcNAc...) asparagine). One can recognise a Disintegrin domain in the interval 387–476 (QAVCGNGIME…HCVPDTFALN (90 aa)). C447 and C468 are oxidised to a cystine. N607, N614, and N621 each carry an N-linked (GlcNAc...) asparagine glycan. An EGF-like domain is found at 616–650 (TGNDCNATKKCKGNGICNNFGNCQCFPDYRPPDCN). Disulfide bonds link C620–C632, C626–C638, and C640–C649. Residues 684–704 (WVILGFFIFLPFIVTFLVGIM) form a helical membrane-spanning segment. Residues 705 to 719 (KRNERKIVPQGEHKI) lie on the Cytoplasmic side of the membrane.

In terms of processing, the prodomain and the metalloprotease-like domain are cleaved during the epididymal maturation of the spermatozoa. As to expression, expressed specifically in testis.

It localises to the membrane. Functionally, sperm surface membrane protein that may be involved in spermatogenesis and fertilization. This is a non catalytic metalloprotease-like protein. The protein is Disintegrin and metalloproteinase domain-containing protein 18 (Adam18) of Mus musculus (Mouse).